The sequence spans 435 residues: Methylenetetrahydrofolate--tRNA-(uracil-5-)-methyltransferase TrmFO (435 aa).

7–12 (GAGLAG) contacts FAD.

It belongs to the MnmG family. TrmFO subfamily. The cofactor is FAD.

It localises to the cytoplasm. The catalysed reaction is uridine(54) in tRNA + (6R)-5,10-methylene-5,6,7,8-tetrahydrofolate + NADH + H(+) = 5-methyluridine(54) in tRNA + (6S)-5,6,7,8-tetrahydrofolate + NAD(+). It carries out the reaction uridine(54) in tRNA + (6R)-5,10-methylene-5,6,7,8-tetrahydrofolate + NADPH + H(+) = 5-methyluridine(54) in tRNA + (6S)-5,6,7,8-tetrahydrofolate + NADP(+). Functionally, catalyzes the folate-dependent formation of 5-methyl-uridine at position 54 (M-5-U54) in all tRNAs. The protein is Methylenetetrahydrofolate--tRNA-(uracil-5-)-methyltransferase TrmFO of Thermotoga sp. (strain RQ2).